Consider the following 610-residue polypeptide: Membrane protein insertase YidC (610 aa).

A helical membrane pass occupies residues 7 to 27; the sequence is FFITIALSILILALWQVFYLG. The disordered stretch occupies residues 36–82; that stretch reads QARIEEQQRQAQQAAQNRQASSSTGDTPQMPANPDSIPGQGDTKAAG. Over residues 44–55 the composition is skewed to low complexity; the sequence is RQAQQAAQNRQA. 5 consecutive transmembrane segments (helical) span residues 358 to 378, 387 to 407, 458 to 478, 510 to 530, and 546 to 566; these read FDLLIDWGWFYFITKPMFYLI, NFGVAILVVTVLLKALFFPLA, WPVLVQIPVFFALYKVLYVTI, TVPHFLMIGVWPIIMGIIMFL, and IFTWMPIIFTFMLASFPAGLV.

Belongs to the OXA1/ALB3/YidC family. Type 1 subfamily. Interacts with the Sec translocase complex via SecD. Specifically interacts with transmembrane segments of nascent integral membrane proteins during membrane integration.

The protein resides in the cell inner membrane. Functionally, required for the insertion and/or proper folding and/or complex formation of integral membrane proteins into the membrane. Involved in integration of membrane proteins that insert both dependently and independently of the Sec translocase complex, as well as at least some lipoproteins. Aids folding of multispanning membrane proteins. This is Membrane protein insertase YidC from Brucella melitensis biotype 1 (strain ATCC 23456 / CCUG 17765 / NCTC 10094 / 16M).